Here is an 806-residue protein sequence, read N- to C-terminus: Transitional endoplasmic reticulum ATPase (806 aa).

The residue at position 2 (Ala-2) is an N-acetylalanine. 2 positions are modified to phosphoserine: Ser-3 and Ser-7. Lys-8 participates in a covalent cross-link: Glycyl lysine isopeptide (Lys-Gly) (interchain with G-Cter in SUMO2). At Ser-13 the chain carries Phosphoserine. Lys-18 is covalently cross-linked (Glycyl lysine isopeptide (Lys-Gly) (interchain with G-Cter in SUMO2)). Ser-37 is subject to Phosphoserine. Residue 247–253 (PGTGKTL) coordinates ATP. An N6,N6,N6-trimethyllysine; by VCPKMT modification is found at Lys-315. Residues Asn-348 and His-384 each contribute to the ATP site. Thr-436 carries the phosphothreonine modification. A Phosphoserine modification is found at Ser-462. An N6-acetyllysine mark is found at Lys-502 and Lys-505. Residue 521–526 (GCGKTL) coordinates ATP. An N6-acetyllysine; alternate modification is found at Lys-668. Lys-668 carries the post-translational modification N6-succinyllysine; alternate. Ser-702 is modified (phosphoserine). Positions 708–727 (RRERERQTNPSAMEVEEDDP) are disordered. At Lys-754 the chain carries N6-acetyllysine. A disordered region spans residues 768 to 806 (FGSFRFPSGNQGGAGPSQGSGGGTGGNVYTEDNDDDLYG). Residues Ser-770, Ser-775, and Ser-787 each carry the phosphoserine modification. Residues 777-793 (NQGGAGPSQGSGGGTGG) show a composition bias toward gly residues. The segment at 797–806 (TEDNDDDLYG) is interaction with UBXN6. Positions 802-806 (DDLYG) match the PIM motif motif. Tyr-805 is modified (phosphotyrosine).

The protein belongs to the AAA ATPase family. Homohexamer. Forms a ring-shaped particle of 12.5 nm diameter, that displays 6-fold radial symmetry. Part of a ternary complex containing STX5A, NSFL1C and VCP. NSFL1C forms a homotrimer that binds to one end of a VCP homohexamer. The complex binds to membranes enriched in phosphatidylethanolamine-containing lipids and promotes Golgi membrane fusion. Binds to a heterodimer of NPLOC4 and UFD1, binding to this heterodimer inhibits Golgi-membrane fusion. Interaction with VCIP135 leads to dissociation of the complex via ATP hydrolysis by VCP. Part of a ternary complex containing NPLOC4, UFD1 and VCP. Interacts with NSFL1C-like protein p37; the complex has membrane fusion activity and is required for Golgi and endoplasmic reticulum biogenesis. Interacts with SELENOS and SYVN1, as well as with DERL1 (via SHP-box motif), DERL2 and DERL3; which probably transfer misfolded proteins from the ER to VCP. Interacts with SVIP and DERL1. Component of a complex required to couple retrotranslocation, ubiquitination and deglycosylation composed of NGLY1, SAKS1, AMFR, VCP and RAD23B. Part of a complex composed of STUB1/CHIP, VCP/p97, CHRNA3, and UBXN2A that modulates the ubiquitination and endoplasmic reticulum-associated degradation (ERAD) of CHRNA3. Within the complex UBXN2A acts as a scaffold protein required for the interaction of CHRNA3 with VCP/p97, this interaction also inhibits CHRNA3 ubiquitination by STUB1/CHIP and subsequently ERAD. Interacts with UBXN2A (via UBX domain); the interaction is required for the interaction of CHRNA3 in the STUB1-VCP-UBXN2A complex. Directly interacts with UBXN4 and RNF19A. Interacts with CASR. Interacts with UBE4B and YOD1. Interacts with clathrin. Interacts with RNF103. Interacts with TRIM13 and TRIM21. Component of a VCP/p97-AMFR/gp78 complex that participates in the final step of the endoplasmic reticulum-associated degradation (ERAD) of HMGCR. Interacts directly with AMFR/gp78 (via its VIM). Interacts with RHBDD1 (via C-terminal domain). Interacts with SPRTN; leading to recruitment to stalled replication forks. Interacts with WASHC5. Interacts with UBOX5. Interacts (via N-terminus) with UBXN7, UBXN8, and probably several other UBX domain-containing proteins (via UBX domains); the interactions are mutually exclusive with VIM-dependent interactions such as those with AMFR and SELENOS. Forms a complex with UBQLN1 and UBXN4. Interacts (via the PIM motif) with RNF31 (via the PUB domain). Interacts with RIGI and RNF125; interaction takes place when RIGI is ubiquitinated via 'Lys-63'-linked ubiquitin on its CARD domains, leading to recruit RNF125 and promote ubiquitination and degradation of RIGI. Interacts with BAG6. Interacts with UBXN10. Interacts with UBXN6; the interaction with UBXN6 is direct and competitive with UFD1. Forms a ternary complex with CAV1 and UBXN6. Interacts with PLAA, UBXN6 and YOD1; may form a complex involved in macroautophagy. Interacts with ANKZF1. Interacts with ubiquitin-binding protein FAF1. Interacts with ZFAND2B (via VIM motif); the interaction is direct. Interacts with ZFAND1 (via its ubiquitin-like region); this interaction occurs in an arsenite-dependent manner. Interacts with CCDC47. Interacts with LMBR1L and UBAC2. Interacts with ATXN3. Interacts with TEX264; bridging VCP to covalent DNA-protein cross-links (DPCs). In terms of processing, ISGylated. Methylation at Lys-315 catalyzed by VCPKMT is increased in the presence of ASPSCR1. Lys-315 methylation may decrease ATPase activity. Post-translationally, phosphorylated by tyrosine kinases in response to T-cell antigen receptor activation. Phosphorylated in mitotic cells.

The protein resides in the cytoplasm. Its subcellular location is the cytosol. The protein localises to the endoplasmic reticulum. It localises to the nucleus. It is found in the stress granule. It carries out the reaction ATP + H2O = ADP + phosphate + H(+). In terms of biological role, necessary for the fragmentation of Golgi stacks during mitosis and for their reassembly after mitosis. Involved in the formation of the transitional endoplasmic reticulum (tER). The transfer of membranes from the endoplasmic reticulum to the Golgi apparatus occurs via 50-70 nm transition vesicles which derive from part-rough, part-smooth transitional elements of the endoplasmic reticulum (tER). Vesicle budding from the tER is an ATP-dependent process. The ternary complex containing UFD1, VCP and NPLOC4 binds ubiquitinated proteins and is necessary for the export of misfolded proteins from the ER to the cytoplasm, where they are degraded by the proteasome. The NPLOC4-UFD1-VCP complex regulates spindle disassembly at the end of mitosis and is necessary for the formation of a closed nuclear envelope. Regulates E3 ubiquitin-protein ligase activity of RNF19A. Component of the VCP/p97-AMFR/gp78 complex that participates in the final step of the sterol-mediated ubiquitination and endoplasmic reticulum-associated degradation (ERAD) of HMGCR. Mediates the endoplasmic reticulum-associated degradation of CHRNA3 in cortical neurons as part of the STUB1-VCP-UBXN2A complex. Involved in endoplasmic reticulum stress-induced pre-emptive quality control, a mechanism that selectively attenuates the translocation of newly synthesized proteins into the endoplasmic reticulum and reroutes them to the cytosol for proteasomal degradation. Involved in clearance process by mediating G3BP1 extraction from stress granules. Also involved in DNA damage response: recruited to double-strand breaks (DSBs) sites in a RNF8- and RNF168-dependent manner and promotes the recruitment of TP53BP1 at DNA damage sites. Recruited to stalled replication forks by SPRTN: may act by mediating extraction of DNA polymerase eta (POLH) to prevent excessive translesion DNA synthesis and limit the incidence of mutations induced by DNA damage. Together with SPRTN metalloprotease, involved in the repair of covalent DNA-protein cross-links (DPCs) during DNA synthesis. Involved in interstrand cross-link repair in response to replication stress by mediating unloading of the ubiquitinated CMG helicase complex. Mediates extraction of PARP1 trapped to chromatin: recognizes and binds ubiquitinated PARP1 and promotes its removal. Required for cytoplasmic retrotranslocation of stressed/damaged mitochondrial outer-membrane proteins and their subsequent proteasomal degradation. Essential for the maturation of ubiquitin-containing autophagosomes and the clearance of ubiquitinated protein by autophagy. Acts as a negative regulator of type I interferon production by interacting with RIGI: interaction takes place when RIGI is ubiquitinated via 'Lys-63'-linked ubiquitin on its CARD domains, leading to recruit RNF125 and promote ubiquitination and degradation of RIGI. May play a role in the ubiquitin-dependent sorting of membrane proteins to lysosomes where they undergo degradation. May more particularly play a role in caveolins sorting in cells. By controlling the steady-state expression of the IGF1R receptor, indirectly regulates the insulin-like growth factor receptor signaling pathway. In Bos taurus (Bovine), this protein is Transitional endoplasmic reticulum ATPase (VCP).